A 144-amino-acid chain; its full sequence is Large ribosomal subunit protein uL15 (144 aa).

Residues 20–49 (GRGIGSGLGKTGGRGHKGQKSRSGGFHKVG) are disordered. Gly residues predominate over residues 21–31 (RGIGSGLGKTG).

It belongs to the universal ribosomal protein uL15 family. As to quaternary structure, part of the 50S ribosomal subunit.

Its function is as follows. Binds to the 23S rRNA. In Neisseria meningitidis serogroup A / serotype 4A (strain DSM 15465 / Z2491), this protein is Large ribosomal subunit protein uL15.